A 287-amino-acid chain; its full sequence is AA9 family lytic polysaccharide monooxygenase C (287 aa).

A signal peptide spans 1–16; the sequence is MKSVLVALATATAVSA. Residue histidine 17 participates in Cu(2+) binding. The N-linked (GlcNAc...) asparagine glycan is linked to asparagine 22. 2 disulfide bridges follow: cysteine 77–cysteine 230 and cysteine 200–cysteine 284. Histidine 114 contributes to the Cu(2+) binding site. O2 contacts are provided by histidine 216 and glutamine 225. Tyrosine 227 serves as a coordination point for Cu(2+).

It belongs to the polysaccharide monooxygenase AA9 family. The cofactor is Cu(2+).

It localises to the secreted. The enzyme catalyses [(1-&gt;4)-beta-D-glucosyl]n+m + reduced acceptor + O2 = 4-dehydro-beta-D-glucosyl-[(1-&gt;4)-beta-D-glucosyl]n-1 + [(1-&gt;4)-beta-D-glucosyl]m + acceptor + H2O.. Lytic polysaccharide monooxygenase (LPMO) that depolymerizes crystalline and amorphous polysaccharides via the oxidation of scissile alpha- or beta-(1-4)-glycosidic bonds, yielding C1 or C4 oxidation products. Catalysis by LPMOs requires the reduction of the active-site copper from Cu(II) to Cu(I) by a reducing agent and H(2)O(2) or O(2) as a cosubstrate. This Podospora anserina (strain S / ATCC MYA-4624 / DSM 980 / FGSC 10383) (Pleurage anserina) protein is AA9 family lytic polysaccharide monooxygenase C.